We begin with the raw amino-acid sequence, 288 residues long: MKDRTQELRTAKDSDDDDDVTVTVDRDRFMDEFFEQVEEIRGFIDKISENVEEVKRKHSAILASPNPDEKTKEELEELMSDIKKTANKVRSKLKSIEQSIEQEEGLNRSSADLRIRKTQHSTLSRKFVEVMSEYNATQSDYRERCKGRIQRQLEITGRTTTSEELEDMLESGNPAIFASGIIMDSSISKQALSEIETRHSEIIKLENSIRELHDMFMDMAMLVESQGEMIDRIEYNVEHSVDYVERAVSDTKKAVKYQSKARRKKIMIVICCVVLGIVIASTFGGIFG.

Residues 1–13 (MKDRTQELRTAKD) show a composition bias toward basic and acidic residues. The interval 1 to 20 (MKDRTQELRTAKDSDDDDDV) is disordered. Over 1–265 (MKDRTQELRT…KYQSKARRKK (265 aa)) the chain is Cytoplasmic. Residues Ser14, Ser64, and Ser95 each carry the phosphoserine modification. Positions 68 to 109 (DEKTKEELEELMSDIKKTANKVRSKLKSIEQSIEQEEGLNRS) form a coiled coil. Ser188 carries the post-translational modification Phosphoserine; by DAPK1. The t-SNARE coiled-coil homology domain occupies 192 to 254 (LSEIETRHSE…ERAVSDTKKA (63 aa)). Glycyl lysine isopeptide (Lys-Gly) (interchain with G-Cter in SUMO) cross-links involve residues Lys252, Lys253, and Lys256. A helical; Anchor for type IV membrane protein membrane pass occupies residues 266 to 288 (IMIVICCVVLGIVIASTFGGIFG).

It belongs to the syntaxin family. As to quaternary structure, part of the SNARE core complex containing SNAP25, VAMP2 and STX1A; this complex constitutes the basic catalytic machinery of the complex neurotransmitter release apparatus. The SNARE complex interacts with CPLX1. Interacts with STXBP1. The interaction with STXBP1 promotes assembly of the SNARE complex. Interacts (via C-terminus) with KCNB1 (via C-terminus); the interaction increases in a calcium-dependent manner and induces a pore-independent enhancement of exocytosis in neuroendocrine cells, chromaffin cells, pancreatic beta cells and from the soma of dorsal root ganglia (DRG) neurons. Interacts with SYTL4. Interacts with STXBP6. Interacts with PLCL1 (via C2 domain). Interacts with OTOF. Interacts with LGI3. Interacts (via the H3 domain) with SLC6A4 (via the N-terminus); this interaction regulates SLC4A6 channel conductance in thalamocortical neurons. Interacts with SYT6 and SYT8; the interaction is Ca(2+)-dependent. Interacts with VAMP8. Interacts with SNAP23. Interacts with VAPA and SYBU. Interacts with PRRT2. Interacts with SEPT8. Interacts with STXBP5L. Interacts with synaptotagmin-1/SYT1. Interacts with SEPTIN5; in the cerebellar cortex. Interacts with SEPTIN4; in the striatum. Post-translationally, phosphorylated by CK2. Phosphorylation at Ser-188 by DAPK1 significantly decreases its interaction with STXBP1. In terms of processing, sumoylated, sumoylation is required for regulation of synaptic vesicle endocytosis. (Microbial infection) Targeted and hydrolyzed by C.botulinum neurotoxin type C (BoNT/C) which inhibits neurotransmitter release. Probably hydrolyzes the 253-Lys-|-Ala-254 bond.

Its subcellular location is the cytoplasmic vesicle. It is found in the secretory vesicle. The protein resides in the synaptic vesicle membrane. It localises to the synapse. The protein localises to the synaptosome. Its subcellular location is the cell membrane. Functionally, plays an essential role in hormone and neurotransmitter calcium-dependent exocytosis and endocytosis. Part of the SNARE (Soluble NSF Attachment Receptor) complex composed of SNAP25, STX1A and VAMP2 which mediates the fusion of synaptic vesicles with the presynaptic plasma membrane. STX1A and SNAP25 are localized on the plasma membrane while VAMP2 resides in synaptic vesicles. The pairing of the three SNAREs from the N-terminal SNARE motifs to the C-terminal anchors leads to the formation of the SNARE complex, which brings membranes into close proximity and results in final fusion. Participates in the calcium-dependent regulation of acrosomal exocytosis in sperm. Also plays an important role in the exocytosis of hormones such as insulin or glucagon-like peptide 1 (GLP-1). This chain is Syntaxin-1A (STX1A), found in Bos taurus (Bovine).